Here is a 322-residue protein sequence, read N- to C-terminus: CRISPR-associated endonuclease Cas1 (322 aa).

Residues glutamate 149, histidine 214, and glutamate 229 each coordinate Mn(2+).

The protein belongs to the CRISPR-associated endonuclease Cas1 family. Homodimer, forms a heterotetramer with a Cas2 homodimer. The cofactor is Mg(2+). Requires Mn(2+) as cofactor.

Its function is as follows. CRISPR (clustered regularly interspaced short palindromic repeat), is an adaptive immune system that provides protection against mobile genetic elements (viruses, transposable elements and conjugative plasmids). CRISPR clusters contain spacers, sequences complementary to antecedent mobile elements, and target invading nucleic acids. CRISPR clusters are transcribed and processed into CRISPR RNA (crRNA). Acts as a dsDNA endonuclease. Involved in the integration of spacer DNA into the CRISPR cassette. In Pyrococcus horikoshii (strain ATCC 700860 / DSM 12428 / JCM 9974 / NBRC 100139 / OT-3), this protein is CRISPR-associated endonuclease Cas1.